The chain runs to 362 residues: Spermidine/putrescine import ATP-binding protein PotA (362 aa).

The ABC transporter domain maps to 6–237 (ISFKHVVKSY…PINHYVADFI (232 aa)). Residue 39-46 (GPSGCGKT) coordinates ATP.

It belongs to the ABC transporter superfamily. Spermidine/putrescine importer (TC 3.A.1.11.1) family. In terms of assembly, the complex is composed of two ATP-binding proteins (PotA), two transmembrane proteins (PotB and PotC) and a solute-binding protein (PotD).

Its subcellular location is the cell membrane. It carries out the reaction ATP + H2O + polyamine-[polyamine-binding protein]Side 1 = ADP + phosphate + polyamineSide 2 + [polyamine-binding protein]Side 1.. In terms of biological role, part of the ABC transporter complex PotABCD involved in spermidine/putrescine import. Responsible for energy coupling to the transport system. The protein is Spermidine/putrescine import ATP-binding protein PotA of Ligilactobacillus salivarius (strain UCC118) (Lactobacillus salivarius).